A 251-amino-acid chain; its full sequence is 5-oxoprolinase subunit A (251 aa).

This sequence belongs to the LamB/PxpA family. Forms a complex composed of PxpA, PxpB and PxpC.

It carries out the reaction 5-oxo-L-proline + ATP + 2 H2O = L-glutamate + ADP + phosphate + H(+). Functionally, catalyzes the cleavage of 5-oxoproline to form L-glutamate coupled to the hydrolysis of ATP to ADP and inorganic phosphate. This chain is 5-oxoprolinase subunit A, found in Vibrio parahaemolyticus serotype O3:K6 (strain RIMD 2210633).